The primary structure comprises 537 residues: Glucans biosynthesis protein D 2 (537 aa).

A signal peptide (tat-type signal) is located at residues 1–28 (MVTRRHLLASASLSATLAALGITPEALA).

This sequence belongs to the OpgD/OpgG family. In terms of processing, predicted to be exported by the Tat system. The position of the signal peptide cleavage has not been experimentally proven.

It localises to the periplasm. The protein operates within glycan metabolism; osmoregulated periplasmic glucan (OPG) biosynthesis. Its function is as follows. Probably involved in the control of the structural glucose backbone of osmoregulated periplasmic glucans (OPGs). The chain is Glucans biosynthesis protein D 2 (opgD2) from Ralstonia nicotianae (strain ATCC BAA-1114 / GMI1000) (Ralstonia solanacearum).